The sequence spans 209 residues: ATP phosphoribosyltransferase (209 aa).

It belongs to the ATP phosphoribosyltransferase family. Short subfamily. In terms of assembly, heteromultimer composed of HisG and HisZ subunits.

The protein localises to the cytoplasm. The catalysed reaction is 1-(5-phospho-beta-D-ribosyl)-ATP + diphosphate = 5-phospho-alpha-D-ribose 1-diphosphate + ATP. Its pathway is amino-acid biosynthesis; L-histidine biosynthesis; L-histidine from 5-phospho-alpha-D-ribose 1-diphosphate: step 1/9. In terms of biological role, catalyzes the condensation of ATP and 5-phosphoribose 1-diphosphate to form N'-(5'-phosphoribosyl)-ATP (PR-ATP). Has a crucial role in the pathway because the rate of histidine biosynthesis seems to be controlled primarily by regulation of HisG enzymatic activity. This is ATP phosphoribosyltransferase from Sulfurimonas denitrificans (strain ATCC 33889 / DSM 1251) (Thiomicrospira denitrificans (strain ATCC 33889 / DSM 1251)).